Consider the following 553-residue polypeptide: Putative transport protein YidE (553 aa).

The next 5 membrane-spanning stretches (helical) occupy residues 4 to 24, 28 to 48, 65 to 85, 95 to 115, and 158 to 178; these read IALT…IGNV, GVGL…HFVS, FGLI…FFAS, LFAV…HKLF, and MSYA…MWML. RCK C-terminal domains lie at 191-276 and 279-361; these read QQHE…VIGQ and DTSL…VLGN. A run of 6 helical transmembrane segments spans residues 371 to 391, 393 to 413, 439 to 459, 464 to 484, 493 to 513, and 533 to 553; these read MLPV…PVFV, GFPA…ALIL, IVLF…HTLV, LSWI…VGIL, YLTM…LAFA, and LVMF…WSIG.

The protein belongs to the AAE transporter (TC 2.A.81) family. YidE subfamily.

The protein resides in the cell membrane. In Escherichia coli O127:H6 (strain E2348/69 / EPEC), this protein is Putative transport protein YidE.